The chain runs to 445 residues: Adenylosuccinate synthetase (445 aa).

GTP contacts are provided by residues 12–18 (GDEGKGK) and 40–42 (GHT). D13 functions as the Proton acceptor in the catalytic mechanism. Mg(2+) is bound by residues D13 and G40. IMP contacts are provided by residues 13–16 (DEGK), 38–41 (NAGH), T128, R142, Q223, T238, and R302. H41 (proton donor) is an active-site residue. Residue 298-304 (TTTGRKR) coordinates substrate. GTP contacts are provided by residues R304, 330-332 (KLD), and 411-413 (SLG).

The protein belongs to the adenylosuccinate synthetase family. Homodimer. Requires Mg(2+) as cofactor.

It localises to the cytoplasm. It catalyses the reaction IMP + L-aspartate + GTP = N(6)-(1,2-dicarboxyethyl)-AMP + GDP + phosphate + 2 H(+). Its pathway is purine metabolism; AMP biosynthesis via de novo pathway; AMP from IMP: step 1/2. Functionally, plays an important role in the de novo pathway of purine nucleotide biosynthesis. Catalyzes the first committed step in the biosynthesis of AMP from IMP. The sequence is that of Adenylosuccinate synthetase from Cyanothece sp. (strain PCC 7425 / ATCC 29141).